A 376-amino-acid chain; its full sequence is 23S rRNA (uracil(747)-C(5))-methyltransferase RlmC (376 aa).

Positions 3, 11, 14, and 87 each coordinate [4Fe-4S] cluster. S-adenosyl-L-methionine is bound by residues glutamine 212, phenylalanine 241, glutamate 262, and asparagine 307. Cysteine 334 functions as the Nucleophile in the catalytic mechanism.

This sequence belongs to the class I-like SAM-binding methyltransferase superfamily. RNA M5U methyltransferase family. RlmC subfamily.

It carries out the reaction uridine(747) in 23S rRNA + S-adenosyl-L-methionine = 5-methyluridine(747) in 23S rRNA + S-adenosyl-L-homocysteine + H(+). Its function is as follows. Catalyzes the formation of 5-methyl-uridine at position 747 (m5U747) in 23S rRNA. This chain is 23S rRNA (uracil(747)-C(5))-methyltransferase RlmC, found in Citrobacter koseri (strain ATCC BAA-895 / CDC 4225-83 / SGSC4696).